The sequence spans 470 residues: ATP synthase subunit beta (470 aa).

155–162 (GGAGVGKT) serves as a coordination point for ATP.

Belongs to the ATPase alpha/beta chains family. In terms of assembly, F-type ATPases have 2 components, CF(1) - the catalytic core - and CF(0) - the membrane proton channel. CF(1) has five subunits: alpha(3), beta(3), gamma(1), delta(1), epsilon(1). CF(0) has three main subunits: a(1), b(2) and c(9-12). The alpha and beta chains form an alternating ring which encloses part of the gamma chain. CF(1) is attached to CF(0) by a central stalk formed by the gamma and epsilon chains, while a peripheral stalk is formed by the delta and b chains.

Its subcellular location is the cell membrane. It carries out the reaction ATP + H2O + 4 H(+)(in) = ADP + phosphate + 5 H(+)(out). In terms of biological role, produces ATP from ADP in the presence of a proton gradient across the membrane. The catalytic sites are hosted primarily by the beta subunits. This chain is ATP synthase subunit beta, found in Lacticaseibacillus casei (Lactobacillus casei).